We begin with the raw amino-acid sequence, 186 residues long: Large ribosomal subunit protein uL10 (186 aa).

It belongs to the universal ribosomal protein uL10 family. Part of the ribosomal stalk of the 50S ribosomal subunit. The N-terminus interacts with L11 and the large rRNA to form the base of the stalk. The C-terminus forms an elongated spine to which L12 dimers bind in a sequential fashion forming a multimeric L10(L12)X complex.

Its function is as follows. Forms part of the ribosomal stalk, playing a central role in the interaction of the ribosome with GTP-bound translation factors. In Streptomyces virginiae (Streptomyces cinnamonensis), this protein is Large ribosomal subunit protein uL10 (rplJ).